Reading from the N-terminus, the 321-residue chain is Solute carrier family 25 member 33 (321 aa).

3 Solcar repeats span residues 9–118 (ENTL…AKEQ), 126–213 (NSNI…LKKY), and 231–315 (TSFF…IVYL). The next 6 helical transmembrane spans lie at 12-32 (LLHL…TCPL), 49-65 (VYYP…AGMV), 121-141 (GIFV…AAFI), 190-210 (LTAS…YESL), 233-253 (FFGL…IAYP), and 298-318 (QIPN…LLED).

It belongs to the mitochondrial carrier (TC 2.A.29) family. As to expression, expressed in the central nervous system. Also expressed in testis and skeletal muscle. Weakly expressed in heart, liver, kidney, prostate, colon and peripheral blood leukocytes.

It localises to the mitochondrion inner membrane. It carries out the reaction UTP(in) + UDP(out) = UTP(out) + UDP(in). It catalyses the reaction dUTP(out) + UTP(in) = dUTP(in) + UTP(out). The catalysed reaction is 5-methyl-UTP(out) + UTP(in) = 5-methyl-UTP(in) + UTP(out). The enzyme catalyses 5-methyl-UDP(out) + UTP(in) = 5-methyl-UDP(in) + UTP(out). It carries out the reaction UTP(in) + CTP(out) = UTP(out) + CTP(in). It catalyses the reaction CDP(out) + UTP(in) = CDP(in) + UTP(out). The catalysed reaction is dCTP(out) + UTP(in) = dCTP(in) + UTP(out). The enzyme catalyses dCDP(out) + UTP(in) = dCDP(in) + UTP(out). It carries out the reaction UTP(in) + GTP(out) = UTP(out) + GTP(in). It catalyses the reaction UTP(in) + GDP(out) = UTP(out) + GDP(in). The catalysed reaction is dGTP(out) + UTP(in) = dGTP(in) + UTP(out). The enzyme catalyses dGDP(out) + UTP(in) = dGDP(in) + UTP(out). It carries out the reaction ITP(out) + UTP(in) = ITP(in) + UTP(out). Inhibited by pyridoxal 5'-phosphate, 4,7-diphenyl-1,10-phenanthroline, tannic acid, and mercurials (mercury dichloride, mersalyl acid, p-hydroxymercuribenzoate). Functionally, mitochondrial transporter that imports/exports pyrimidine nucleotides into and from mitochondria. Selectively transports uridine, thymidine, guanosine, cytosine and inosine (deoxy)nucleoside di- and triphosphates by an antiport mechanism. May import (deoxy)nucleoside triphosphates in exchange for intramitochondrial (deoxy)nucleoside diphosphates, thus providing precursors necessary for de novo synthesis of mitochondrial DNA and RNA while exporting products of their catabolism. Participates in mitochondrial genome maintenance, regulation of mitochondrial membrane potential and mitochondrial respiration. Upon INS or IGF1 stimulation regulates cell growth and proliferation by controlling mitochondrial DNA replication and transcription, the ratio of mitochondria-to nuclear-encoded components of the electron transport chain resulting in control of mitochondrial ROS production. Participates in dendritic cell endocytosis and may associate with mitochondrial oxidative phosphorylation. The protein is Solute carrier family 25 member 33 (SLC25A33) of Homo sapiens (Human).